The primary structure comprises 278 residues: MSASSSSTNPMSREDATTLLPSVQDKYGGVMTEMTHPMDPSLFSTLLRSSLSTWTLQGKKGVWIKLPKQLIGLAETAVKEGFWFHHAEKDYLMLVYWIPKEDDTLPANASHRVGIGAFVINHNKEVLVVQEKTGRFQGQGIWKFPTGVVNEGEDIHDGSVREVKEETGVDTEFDQILAFRQTHKAFFGKSDLFFVCMLKPLSLEINAQESEIEAAQWMPWEEYINQPFVQNYELLRYMTDICSAKTNGDYEGFTPLRVSAPDQQGNLYYNTRDLHSRN.

One can recognise a Nudix hydrolase domain in the interval 110 to 242 (SHRVGIGAFV…ELLRYMTDIC (133 aa)). The Nudix box signature appears at 147–168 (GVVNEGEDIHDGSVREVKEETG). Glu162 serves as a coordination point for Mg(2+). Glu165 functions as the Proton acceptor in the catalytic mechanism. Position 166 (Glu166) interacts with Mg(2+).

The protein belongs to the Nudix hydrolase family. Mg(2+) serves as cofactor. It depends on Mn(2+) as a cofactor. As to expression, expressed in roots, stems and leaves.

It carries out the reaction ADP-D-ribose + H2O = D-ribose 5-phosphate + AMP + 2 H(+). It catalyses the reaction NAD(+) + H2O = beta-nicotinamide D-ribonucleotide + AMP + 2 H(+). The catalysed reaction is NADH + H2O = reduced beta-nicotinamide D-ribonucleotide + AMP + 2 H(+). Probably mediates the hydrolysis of some nucleoside diphosphate derivatives. In vitro, it can use both NADH and ADP-ribose as substrates; however the relevance of such substrates in vivo is unclear. Confers tolerance to oxidative stress. This is Nudix hydrolase 2 from Arabidopsis thaliana (Mouse-ear cress).